The primary structure comprises 171 residues: uncharacterized protein (171 aa).

The tract at residues 139–171 (ARKPTKSDDEEEEVGKMGGISSSINSWVQRQKL) is disordered. Over residues 158–171 (ISSSINSWVQRQKL) the composition is skewed to polar residues.

This is an uncharacterized protein from Caenorhabditis elegans.